The primary structure comprises 95 residues: Integration host factor subunit beta (95 aa).

This sequence belongs to the bacterial histone-like protein family. As to quaternary structure, heterodimer of an alpha and a beta chain.

Its function is as follows. This protein is one of the two subunits of integration host factor, a specific DNA-binding protein that functions in genetic recombination as well as in transcriptional and translational control. Involved in hydrogenase gene expression. This is Integration host factor subunit beta (ihfB) from Rhodobacter capsulatus (Rhodopseudomonas capsulata).